The chain runs to 1444 residues: MKSNYSTYLYKMSELERIVNGGDVSSIFIEQDDVLGEIKNFNYDLYTKYDSLVLKDPQTQNNSPKPPSLEIFILVNLIALCGRINDKFPNLDKFLTHYKYATNIFNLLSENIINSIEKFKETLSKDLPSFQLSVIANSSIVKKDNSIIKFLSCFGSFMKLESIEYFGSVFNSLIGEEDQFSLDLLQVLIDSSNEYKKFLQILEFNQLQKYYDDGHLCLFHSIKFDNLNEFKLLFNDSTWCQQQQQQQQINPQIFWFILCKYNSSKIAHYLLNDYQINKKSLKQKNPLEISPVTLLEIAFLCFSDKIAIVLFSQFNYHELLPKKSKMKHLIKSTSTLINNNNNNNNNNNNNNNNNNNNNNNNNNNNNNNSKNIGLTQYTVLEGYFLINIRTRSRIAPFIEVLTMNGIHLTNDIIHTRIKSMSSDSIFRIFTEQYQQQQQNPLNNNQKQIQFNENFTRQQKIDFDNCPNEIDTFILDKTQCNLITLSQEFSIKVRAFTFYLSFGEIFTCSCEDYKREFSCKHMFFILLNYYHVPRNSYLIYQRQFTEIERYSIIMNIDLSKINSRIYGTPNFNTFFKIKSSPSSTTSPFQSINNNNNNNLNNNNNNNLNNNNNNENENKFKEDGDDEILQNLNRLNYILLRDFEFGPNDITTKLRETHINLFDRLLLIEDNLEALDKILKNFTQKGCTLSRDLVGDRNLLVLVAILDSTSKEKLSLLNKYWPLPEKTKKFAIPLIFFAISEECLKMFIQISPNLVKSTLNLHDWISILTEFALINETFLDHYPLLSAWYSDARSVETSLFRLFTCMDKIDCINYLIQTYLLPIPTFKNTLNNFETCYFFETYFLENSSIKAEQYLLEQELLEKKKQKEKKKQKQKQSKSKIINNPLSSSSSSSSSPSTSNTTITSTTPTTTTTTTTTTTPTTTTTTTTTSSPKQKPITPIKKEIEKEFEKIELTTPPPPLATTKQQQINENYDISIGKFKFNRKEENVLGRGSNGTLVFKGIWNNRIPVAIKQMQKMFNPLISKEIEVLITLTNKNCYNIVRYIDQEEDESCVYLGLTLCDGSLQNLVEKGDNNLTLTQFLGYDINSSSKNNSRLLELIKDIVYGIQFLHQQGIVHNDLNPRNILIKDDRFIISDLGLSKMEVTSSYSFTMHAPTGQEGFHPAEVLLEKRKTKSVDIFSMGCILFYLMTGGQHPFGDKFYRIVNILTDKPILEPLKHNLVACDLISQMISKNESDRPTIEKILLHPFFWNHEKKVKFIDASLNLFKDSNGLFTSKLNKLINYQEINLKNNIDSSSSNNNNNINSNVINNNNNNNNGMATNIPFLSKPWNQLIDQTLIEHIINKQNQLNGVGNNKKVIIYSFDQVKDLVRCIRNTIQHHKEIQRLVRQSPSSNGDNKQEVLDCLESQELVLSYFEEKVPDLLLFLYQKFKKHLDSKSLIYFNDLIIK.

Residues Thr335–Lys370 are disordered. Residues Asn338–Asn368 are compositionally biased toward low complexity. The SWIM-type zinc-finger motif lies at Phe495–Tyr529. Low complexity predominate over residues Thr584 to Glu613. 2 disordered regions span residues Thr584–Lys619 and Gln864–Ile938. 2 coiled-coil regions span residues Asn593–Glu620 and Ile847–Ile879. Over residues Gln864–Lys876 the composition is skewed to basic residues. Over residues Ser885–Pro937 the composition is skewed to low complexity. The Protein kinase domain maps to Arg981–Phe1246. ATP is bound by residues Leu987 to Leu995 and Lys1010. Asp1116 acts as the Proton acceptor in catalysis. A KEN domain is found at Asn1279–Lys1444.

Belongs to the protein kinase superfamily. Ser/Thr protein kinase family.

It carries out the reaction L-seryl-[protein] + ATP = O-phospho-L-seryl-[protein] + ADP + H(+). It catalyses the reaction L-threonyl-[protein] + ATP = O-phospho-L-threonyl-[protein] + ADP + H(+). In Dictyostelium discoideum (Social amoeba), this protein is Probable serine/threonine-protein kinase irlC (irlC).